The chain runs to 779 residues: Serine/threonine-protein kinase SIK1 (779 aa).

One can recognise a Protein kinase domain in the interval 27–278 (YDVERTLGKG…IAQIRQHRWM (252 aa)). ATP contacts are provided by residues 33 to 41 (LGKGNFAVV) and Lys-56. The Proton acceptor role is filled by Asp-149. Thr-182 is subject to Phosphothreonine; by LKB1 and GSK3-beta. Ser-186 carries the post-translational modification Phosphoserine; by autocatalysis. A UBA domain is found at 303-343 (DYNEQVLGIMQALGIDRQRTIESLQNSSYNHFAAIYYLLLE). Thr-322 carries the phosphothreonine; by CaMK1 modification. 2 disordered regions span residues 350-375 (SAQPSSRPTPAPTRQPQLRSSDLSSL) and 449-472 (EARQGPSLEEEQEVQEPLPGSTGR). The segment covering 363-373 (RQPQLRSSDLS) has biased composition (polar residues). Phosphoserine; by PKA is present on Ser-577. The tract at residues 586–612 (KAFRQQLRKNARTKGFLGLNKIKGLAR) is RK-rich region. Positions 621-641 (TPRGGMSTFHTPAPSSGLQGC) are disordered. Residues 628–641 (TFHTPAPSSGLQGC) are compositionally biased toward polar residues.

It belongs to the protein kinase superfamily. CAMK Ser/Thr protein kinase family. AMPK subfamily. As to quaternary structure, interacts (when phosphorylated on Thr-182 and Ser-186) with YWHAZ. Interacts with ATP1A1. The cofactor is Mg(2+). In terms of processing, phosphorylated at Thr-182 by STK11/LKB1 in complex with STE20-related adapter-alpha (STRADA) pseudo kinase and CAB39, leading to its activation. Phosphorylation at Thr-182 promotes autophosphorylation at Ser-186, which is required for sustained activity. Autophosphorylation at Ser-186 is maintained by sequential phosphorylation at Thr-182 by GSK3-beta. GSK3-beta cannot initiate phosphorylation at Thr-182, it can only maintain it. Phosphorylation at Ser-577 by PKA promotes translocation to the cytoplasm. Phosphorylation at Thr-322 by CaMK1 following intracellular sodium concentration leads to activation. As to expression, expressed in lung, skin, ovary, heart and stomach. No expression in brain, liver or adult skeletal muscle but is present in skeletal muscle progenitor cells of the somite beginning at 9.5 dpc. Present at 8.0 dpc in the monolayer of presumptive myocardial cells but rapidly down-regulated at 8.5 dpc upon primitive ventricle formation, although still present in myocardial cells that will populate the primitive atrium and bulbus cordis. At 9.5 dpc expression is down-regulated in the primitive atrium but observed in the sinus venosus and truncus arteriosus.

The protein resides in the cytoplasm. It localises to the nucleus. It catalyses the reaction L-seryl-[protein] + ATP = O-phospho-L-seryl-[protein] + ADP + H(+). The enzyme catalyses L-threonyl-[protein] + ATP = O-phospho-L-threonyl-[protein] + ADP + H(+). Its activity is regulated as follows. Activated by phosphorylation on Thr-182. Also activated by phosphorylation on Thr-322 in response to increases in intracellular sodium in parallel with elevations in intracellular calcium through the reversible sodium/calcium exchanger. In terms of biological role, serine/threonine-protein kinase involved in various processes such as cell cycle regulation, gluconeogenesis and lipogenesis regulation, muscle growth and differentiation and tumor suppression. Phosphorylates HDAC4, HDAC5, PPME1, SREBF1, CRTC1/TORC1 and CRTC2/TORC2. Acts as a tumor suppressor and plays a key role in p53/TP53-dependent anoikis, a type of apoptosis triggered by cell detachment: required for phosphorylation of p53/TP53 in response to loss of adhesion and is able to suppress metastasis. Part of a sodium-sensing signaling network, probably by mediating phosphorylation of PPME1: following increases in intracellular sodium, SIK1 is activated by CaMK1 and phosphorylates PPME1 subunit of protein phosphatase 2A (PP2A), leading to dephosphorylation of sodium/potassium-transporting ATPase ATP1A1 and subsequent increase activity of ATP1A1. Acts as a regulator of muscle cells by phosphorylating and inhibiting class II histone deacetylases HDAC4 and HDAC5, leading to promote expression of MEF2 target genes in myocytes. Also required during cardiomyogenesis by regulating the exit of cardiomyoblasts from the cell cycle via down-regulation of CDKN1C/p57Kip2. Acts as a regulator of hepatic gluconeogenesis by phosphorylating and repressing the CREB-specific coactivators CRTC1/TORC1 and CRTC2/TORC2, leading to inhibit CREB activity. Also regulates hepatic lipogenesis by phosphorylating and inhibiting SREBF1. In concert with CRTC1/TORC1, regulates the light-induced entrainment of the circadian clock by attenuating PER1 induction; represses CREB-mediated transcription of PER1 by phosphorylating and deactivating CRTC1/TORC1. The chain is Serine/threonine-protein kinase SIK1 (Sik1) from Mus musculus (Mouse).